The primary structure comprises 165 residues: MAENFSFDVVSDFDRQELVNALDQVKREISQRYDLKGTETILELEKENIFITTNSELTLNSVIDIIRQKAIKRKLSLKIFEYKSIEAVSGNKVKQTITLKKGLNQEIAKKISKNLRDEIKKINVSINGETLRVMSKSKNDLQLAIKLLENLEETYKIPLQANNYR.

The protein belongs to the YajQ family.

Its function is as follows. Nucleotide-binding protein. This is Nucleotide-binding protein P9515_05441 from Prochlorococcus marinus (strain MIT 9515).